Reading from the N-terminus, the 129-residue chain is Large-conductance mechanosensitive channel (129 aa).

Transmembrane regions (helical) follow at residues 8–28 (FIMR…AAFT), 30–50 (IVKS…AGAV), and 67–87 (GAVL…FLII).

The protein belongs to the MscL family. Homopentamer.

The protein resides in the cell membrane. In terms of biological role, channel that opens in response to stretch forces in the membrane lipid bilayer. May participate in the regulation of osmotic pressure changes within the cell. This chain is Large-conductance mechanosensitive channel, found in Oenococcus oeni (strain ATCC BAA-331 / PSU-1).